A 309-amino-acid chain; its full sequence is uncharacterized protein (309 aa).

Residues 272–291 (PSLDAPSETVEAFPEPQKNL) form a disordered region.

This is an uncharacterized protein from Bacillus subtilis (strain 168).